Reading from the N-terminus, the 723-residue chain is MEFASFLVSLGTSAIIFVVLMFLFTWLSRRPGNVPVYYPNRILKGMDPWEGSSLTRNPFAWIREAFTSTEQDVVKLSGVDTAVYFVFQSTVLGIFALSALLLLPTLLPIAATDNNLETSRSATDTTSNGTFSQLDNLSMANITKSSSRLWAFLGAVYWVSVVTYFMLWKAYKHVAALRAQALMTSEEVLPEQFAILVRDIPSPPNGETQKEFVDSYFRDIYPETFYRSLVVTENSKINKIWEDLEGYKKKLARAEAAFAATSNRPTNKTGLLGLVGERVDSIDYYTKLINESVAKLEAEQRTVLAERQQTAAVVFFTDRVTAALAAQSLHCQMVDKWTVTEAPEPRQLIWENLKIKFFSRIVRQYVIYFLVAITILFYMIPIAFVSAITTLANLQKALPFLKPIVDIAFIRTILESYLPQIALIVFLAMLPKFLMFLSKSEGIPSQSHAIRATSGKYFYFSVLNVFIGVTLAGSLFENLKALEEKPNSFITLLATSLPKSATFFLTYVALKFFVGYGLELSRIIPLIIFHLKKKYLCKTEAEVKEAWYPGDLSYATRVPSDMLILTITFCYSVIAPLILVFGVIYFGLGWLILRNQALKVYVPSYESYGRMWPHIHTRILAALFLFQLVMFGYLGVKIFVWAILLVPLIFISLIFGYVCRQKFYGGFEHTALEVACRELKQRPDLEEVFRAYIPHSLSTHKGDDHQFKGAMSRYQDYAAISAA.

At 1-5 (MEFAS) the chain is on the cytoplasmic side. A helical membrane pass occupies residues 6 to 26 (FLVSLGTSAIIFVVLMFLFTW). The Extracellular portion of the chain corresponds to 27-90 (LSRRPGNVPV…TAVYFVFQST (64 aa)). Residues 91–111 (VLGIFALSALLLLPTLLPIAA) traverse the membrane as a helical segment. Over 112-148 (TDNNLETSRSATDTTSNGTFSQLDNLSMANITKSSSR) the chain is Cytoplasmic. A helical membrane pass occupies residues 149–169 (LWAFLGAVYWVSVVTYFMLWK). Residues 170-364 (AYKHVAALRA…IKFFSRIVRQ (195 aa)) lie on the Extracellular side of the membrane. The chain crosses the membrane as a helical span at residues 365-385 (YVIYFLVAITILFYMIPIAFV). At 386–416 (SAITTLANLQKALPFLKPIVDIAFIRTILES) the chain is on the cytoplasmic side. A helical membrane pass occupies residues 417 to 437 (YLPQIALIVFLAMLPKFLMFL). Topologically, residues 438–456 (SKSEGIPSQSHAIRATSGK) are extracellular. A helical transmembrane segment spans residues 457–477 (YFYFSVLNVFIGVTLAGSLFE). Residues 478–508 (NLKALEEKPNSFITLLATSLPKSATFFLTYV) lie on the Cytoplasmic side of the membrane. The chain crosses the membrane as a helical span at residues 509-529 (ALKFFVGYGLELSRIIPLIIF). Residues 530–572 (HLKKKYLCKTEAEVKEAWYPGDLSYATRVPSDMLILTITFCYS) are Extracellular-facing. A helical membrane pass occupies residues 573–593 (VIAPLILVFGVIYFGLGWLIL). At 594–614 (RNQALKVYVPSYESYGRMWPH) the chain is on the cytoplasmic side. The helical transmembrane segment at 615 to 635 (IHTRILAALFLFQLVMFGYLG) threads the bilayer. Topologically, residues 636–637 (VK) are extracellular. The helical transmembrane segment at 638-658 (IFVWAILLVPLIFISLIFGYV) threads the bilayer. The Cytoplasmic segment spans residues 659–723 (CRQKFYGGFE…YQDYAAISAA (65 aa)).

The protein belongs to the CSC1 (TC 1.A.17) family.

Its subcellular location is the plastid. The protein localises to the chloroplast membrane. In terms of biological role, acts as an osmosensitive calcium-permeable cation channel. In Brassica juncea (Indian mustard), this protein is CSC1-like protein ERD4 (ERD4).